A 234-amino-acid chain; its full sequence is NLP effector protein 1 (234 aa).

The signal sequence occupies residues 1-18 (MQLRAFISVFASLACVNA). Residue N66 is glycosylated (N-linked (GlcNAc...) asparagine). The Conserved undecapeptide motif I signature appears at 102 to 112 (AFMYSWYMPKD). The Hepta-peptide GHRHDWE motif II motif lies at 119–125 (GHRHDWE).

Belongs to the Necrosis inducing protein (NPP1) family.

It is found in the secreted. In terms of biological role, secreted effector that contributes to virulence during infection by P.capsici. Induces distinct chlorosis at 3 days after inoculation of host C.annuum leaves, and all the chlorotic areas gradually turn brown and become moderately necrotic at 7 days after inoculation. Leads only to chlorotic areas, without necrosis at 7 days after non-host N.benthamiana leaves infection. Induces cell death in hot pepper. In Phytophthora capsici, this protein is NLP effector protein 1.